A 252-amino-acid chain; its full sequence is Small ribosomal subunit protein uS2A (252 aa).

The residue at position 2 (S2) is an N-acetylserine. Residues 209–252 (EVEQQVAEEATTEEAGEEEAKEEVTEEQAEATEWAEENADNVEW) form a disordered region. The span at 218–252 (ATTEEAGEEEAKEEVTEEQAEATEWAEENADNVEW) shows a compositional bias: acidic residues.

The protein belongs to the universal ribosomal protein uS2 family. As to quaternary structure, component of the small ribosomal subunit. Mature ribosomes consist of a small (40S) and a large (60S) subunit. The 40S subunit contains about 33 different proteins and 1 molecule of RNA (18S). The 60S subunit contains about 49 different proteins and 3 molecules of RNA (25S, 5.8S and 5S). Interacts with RPS21.

It localises to the cytoplasm. Required for the assembly and/or stability of the 40S ribosomal subunit. Required for the processing of the 20S rRNA-precursor to mature 18S rRNA in a late step of the maturation of 40S ribosomal subunits. The sequence is that of Small ribosomal subunit protein uS2A from Saccharomyces cerevisiae (strain RM11-1a) (Baker's yeast).